The chain runs to 68 residues: ATP synthase F(0) complex subunit 8 (68 aa).

The helical transmembrane segment at 8–24 threads the bilayer; the sequence is TWSITIVSMIITLFIMF. Residue Lys54 is modified to N6-acetyllysine; alternate. Position 54 is an N6-succinyllysine; alternate (Lys54). An N6-acetyllysine modification is found at Lys57.

It belongs to the ATPase protein 8 family. Component of the ATP synthase complex composed at least of ATP5F1A/subunit alpha, ATP5F1B/subunit beta, ATP5MC1/subunit c (homooctomer), MT-ATP6/subunit a, MT-ATP8/subunit 8, ATP5ME/subunit e, ATP5MF/subunit f, ATP5MG/subunit g, ATP5MK/subunit k, ATP5MJ/subunit j, ATP5F1C/subunit gamma, ATP5F1D/subunit delta, ATP5F1E/subunit epsilon, ATP5PF/subunit F6, ATP5PB/subunit b, ATP5PD/subunit d, ATP5PO/subunit OSCP. ATP synthase complex consists of a soluble F(1) head domain (subunits alpha(3) and beta(3)) - the catalytic core - and a membrane F(0) domain - the membrane proton channel (subunits c, a, 8, e, f, g, k and j). These two domains are linked by a central stalk (subunits gamma, delta, and epsilon) rotating inside the F1 region and a stationary peripheral stalk (subunits F6, b, d, and OSCP). Interacts with PRICKLE3.

The protein localises to the mitochondrion membrane. Its function is as follows. Subunit 8, of the mitochondrial membrane ATP synthase complex (F(1)F(0) ATP synthase or Complex V) that produces ATP from ADP in the presence of a proton gradient across the membrane which is generated by electron transport complexes of the respiratory chain. ATP synthase complex consist of a soluble F(1) head domain - the catalytic core - and a membrane F(1) domain - the membrane proton channel. These two domains are linked by a central stalk rotating inside the F(1) region and a stationary peripheral stalk. During catalysis, ATP synthesis in the catalytic domain of F(1) is coupled via a rotary mechanism of the central stalk subunits to proton translocation. In vivo, can only synthesize ATP although its ATP hydrolase activity can be activated artificially in vitro. Part of the complex F(0) domain. In Ceratotherium simum (White rhinoceros), this protein is ATP synthase F(0) complex subunit 8.